The sequence spans 424 residues: Multifunctional CCA protein (424 aa).

G8 and R11 together coordinate ATP. CTP contacts are provided by G8 and R11. 2 residues coordinate Mg(2+): D21 and D23. R91, R149, and R152 together coordinate ATP. 3 residues coordinate CTP: R91, R149, and R152. In terms of domain architecture, HD spans 238-339 (TGIHLMMVLD…VRLLERCDAF (102 aa)).

The protein belongs to the tRNA nucleotidyltransferase/poly(A) polymerase family. Bacterial CCA-adding enzyme type 1 subfamily. In terms of assembly, monomer. Can also form homodimers and oligomers. The cofactor is Mg(2+). It depends on Ni(2+) as a cofactor.

The catalysed reaction is a tRNA precursor + 2 CTP + ATP = a tRNA with a 3' CCA end + 3 diphosphate. It carries out the reaction a tRNA with a 3' CCA end + 2 CTP + ATP = a tRNA with a 3' CCACCA end + 3 diphosphate. In terms of biological role, catalyzes the addition and repair of the essential 3'-terminal CCA sequence in tRNAs without using a nucleic acid template. Adds these three nucleotides in the order of C, C, and A to the tRNA nucleotide-73, using CTP and ATP as substrates and producing inorganic pyrophosphate. tRNA 3'-terminal CCA addition is required both for tRNA processing and repair. Also involved in tRNA surveillance by mediating tandem CCA addition to generate a CCACCA at the 3' terminus of unstable tRNAs. While stable tRNAs receive only 3'-terminal CCA, unstable tRNAs are marked with CCACCA and rapidly degraded. This Polaromonas naphthalenivorans (strain CJ2) protein is Multifunctional CCA protein.